The primary structure comprises 718 residues: Fatty acid oxidation complex subunit alpha (718 aa).

The enoyl-CoA hydratase/isomerase stretch occupies residues Met1–Glu188. Asp295 contributes to the substrate binding site. The segment at Thr310–Lys718 is 3-hydroxyacyl-CoA dehydrogenase. Residues Met324, Asp343, Val400–Glu402, Lys407, and Ser429 each bind NAD(+). His450 serves as the catalytic For 3-hydroxyacyl-CoA dehydrogenase activity. Asn453 provides a ligand contact to NAD(+). Residues Asn500 and Tyr658 each contribute to the substrate site.

This sequence in the N-terminal section; belongs to the enoyl-CoA hydratase/isomerase family. The protein in the C-terminal section; belongs to the 3-hydroxyacyl-CoA dehydrogenase family. Heterotetramer of two alpha chains (FadB) and two beta chains (FadA).

The catalysed reaction is a (3S)-3-hydroxyacyl-CoA + NAD(+) = a 3-oxoacyl-CoA + NADH + H(+). The enzyme catalyses a (3S)-3-hydroxyacyl-CoA = a (2E)-enoyl-CoA + H2O. It carries out the reaction a 4-saturated-(3S)-3-hydroxyacyl-CoA = a (3E)-enoyl-CoA + H2O. It catalyses the reaction (3S)-3-hydroxybutanoyl-CoA = (3R)-3-hydroxybutanoyl-CoA. The catalysed reaction is a (3Z)-enoyl-CoA = a 4-saturated (2E)-enoyl-CoA. The enzyme catalyses a (3E)-enoyl-CoA = a 4-saturated (2E)-enoyl-CoA. Its pathway is lipid metabolism; fatty acid beta-oxidation. Functionally, involved in the aerobic and anaerobic degradation of long-chain fatty acids via beta-oxidation cycle. Catalyzes the formation of 3-oxoacyl-CoA from enoyl-CoA via L-3-hydroxyacyl-CoA. It can also use D-3-hydroxyacyl-CoA and cis-3-enoyl-CoA as substrate. The polypeptide is Fatty acid oxidation complex subunit alpha (Idiomarina loihiensis (strain ATCC BAA-735 / DSM 15497 / L2-TR)).